The following is a 289-amino-acid chain: Probable early E4 33 kDa protein (289 aa).

Belongs to the adenoviridae E4 30 to 34 kDa protein family. As to quaternary structure, interacts with E1B-55k.

The protein localises to the host nucleus. It is found in the host cytoplasm. Plays a major role to prevent cellular inhibition of viral genome replication by nuclear bodies. Assembles an SCF-like E3 ubiquitin ligase complex based on the cellular proteins ELOB, ELOC, CUL5 and RBX1, in cooperation with viral E1B-55K. This viral RING-type ligase ubiquitinates cellular substrates prior to proteasomal degradation: p53/TP53, LIG4, MRE11-RAD50-NBS1 (MRN) complex, ITGA3, DAXX and BLM. The polypeptide is Probable early E4 33 kDa protein (Mus musculus (Mouse)).